We begin with the raw amino-acid sequence, 324 residues long: Quinolinate synthase (324 aa).

Iminosuccinate-binding residues include His-39 and Ser-56. [4Fe-4S] cluster is bound at residue Cys-101. Iminosuccinate contacts are provided by residues 127-129 (YIN) and Ser-144. A [4Fe-4S] cluster-binding site is contributed by Cys-187. Residues 213 to 215 (HPE) and Thr-230 contribute to the iminosuccinate site. Cys-280 contacts [4Fe-4S] cluster.

It belongs to the quinolinate synthase family. Type 2 subfamily. [4Fe-4S] cluster is required as a cofactor.

The protein localises to the cytoplasm. The enzyme catalyses iminosuccinate + dihydroxyacetone phosphate = quinolinate + phosphate + 2 H2O + H(+). The protein operates within cofactor biosynthesis; NAD(+) biosynthesis; quinolinate from iminoaspartate: step 1/1. In terms of biological role, catalyzes the condensation of iminoaspartate with dihydroxyacetone phosphate to form quinolinate. The polypeptide is Quinolinate synthase (Nostoc punctiforme (strain ATCC 29133 / PCC 73102)).